Reading from the N-terminus, the 264-residue chain is Thymidylate synthase (264 aa).

Arginine 21 lines the dUMP pocket. Histidine 51 contributes to the (6R)-5,10-methylene-5,6,7,8-tetrahydrofolate binding site. Residue 126–127 coordinates dUMP; sequence RR. Residue cysteine 146 is the Nucleophile of the active site. DUMP contacts are provided by residues 166-169, asparagine 177, and 207-209; these read RSAD and HLY. Residue aspartate 169 participates in (6R)-5,10-methylene-5,6,7,8-tetrahydrofolate binding. Position 263 (alanine 263) interacts with (6R)-5,10-methylene-5,6,7,8-tetrahydrofolate.

The protein belongs to the thymidylate synthase family. Bacterial-type ThyA subfamily. As to quaternary structure, homodimer.

It localises to the cytoplasm. It carries out the reaction dUMP + (6R)-5,10-methylene-5,6,7,8-tetrahydrofolate = 7,8-dihydrofolate + dTMP. The protein operates within pyrimidine metabolism; dTTP biosynthesis. Catalyzes the reductive methylation of 2'-deoxyuridine-5'-monophosphate (dUMP) to 2'-deoxythymidine-5'-monophosphate (dTMP) while utilizing 5,10-methylenetetrahydrofolate (mTHF) as the methyl donor and reductant in the reaction, yielding dihydrofolate (DHF) as a by-product. This enzymatic reaction provides an intracellular de novo source of dTMP, an essential precursor for DNA biosynthesis. This is Thymidylate synthase from Alkalilimnicola ehrlichii (strain ATCC BAA-1101 / DSM 17681 / MLHE-1).